A 111-amino-acid chain; its full sequence is Prothymosin alpha (111 aa).

Position 1 is an N-acetylmethionine (M1). The segment at 1-111 is disordered; the sequence is MSDAAVDTSS…TKKQKTDEDD (111 aa). Residue S2 is modified to N-acetylserine; in Prothymosin alpha, N-terminally processed. At S2 the chain carries Phosphoserine. Phosphothreonine is present on T8. Phosphoserine is present on residues S9 and S10. A phosphothreonine mark is found at T13 and T14. The segment covering 13–31 has biased composition (basic and acidic residues); sequence TTKDLKEKKEVVEEAENGR. N6-acetyllysine; alternate is present on K15. The residue at position 15 (K15) is an N6-succinyllysine; alternate. Acidic residues predominate over residues 40 to 84; sequence ENEENGEQEADNEVDEEEEEGGEEEEEEEEGDGEEEDGDEDEEAE. Positions 101-111 are enriched in basic and acidic residues; sequence DTKKQKTDEDD. T102 is modified (phosphothreonine). Position 103 is an N6-acetyllysine; alternate (K103). A Glycyl lysine isopeptide (Lys-Gly) (interchain with G-Cter in SUMO2); alternate cross-link involves residue K103. The residue at position 107 (T107) is a Phosphothreonine.

The protein belongs to the pro/parathymosin family. Interacts with NUPR1; regulates apoptotic process. In terms of processing, covalently linked to a small RNA of about 20 nucleotides.

The protein resides in the nucleus. In terms of biological role, prothymosin alpha may mediate immune function by conferring resistance to certain opportunistic infections. The polypeptide is Prothymosin alpha (PTMA) (Homo sapiens (Human)).